The chain runs to 437 residues: Putative galacturan 1,4-alpha-galacturonidase A (437 aa).

Positions 1 to 20 (MKLSGSSALLLLGFGLLGHA) are cleaved as a signal peptide. 6 N-linked (GlcNAc...) asparagine glycosylation sites follow: asparagine 30, asparagine 101, asparagine 110, asparagine 161, asparagine 196, and asparagine 203. The stretch at 222–243 (SDHVTITNWVYEGGDDAVAFKP) is one PbH1 1 repeat. Aspartate 236 functions as the Proton donor in the catalytic mechanism. N-linked (GlcNAc...) asparagine glycosylation is found at asparagine 244, asparagine 252, asparagine 278, asparagine 324, asparagine 352, asparagine 371, asparagine 382, and asparagine 387. PbH1 repeat units lie at residues 245-265 (STNIHVENVTVYGGPGIAFGS), 276-302 (VENITVKNANFQPSSQRAMNSGIYFKS), and 322-343 (VRNVTVEDITFKDVQLPIYIDT). Cysteines 396 and 402 form a disulfide.

Belongs to the glycosyl hydrolase 28 family.

The protein localises to the secreted. The catalysed reaction is [(1-&gt;4)-alpha-D-galacturonosyl](n) + H2O = alpha-D-galacturonate + [(1-&gt;4)-alpha-D-galacturonosyl](n-1). Functionally, specific in hydrolyzing the terminal glycosidic bond of polygalacturonic acid and oligogalacturonates. The protein is Putative galacturan 1,4-alpha-galacturonidase A (rgxA) of Aspergillus flavus (strain ATCC 200026 / FGSC A1120 / IAM 13836 / NRRL 3357 / JCM 12722 / SRRC 167).